The primary structure comprises 469 residues: Adenosylhomocysteinase (469 aa).

Substrate-binding residues include T63, D139, and E164. Residue 165–167 (TTT) participates in NAD(+) binding. Substrate is bound by residues K194 and D198. Residues N199, 228-233 (GYGDVG), E251, N300, 321-323 (IGH), and N375 contribute to the NAD(+) site.

Belongs to the adenosylhomocysteinase family. It depends on NAD(+) as a cofactor.

The protein resides in the cytoplasm. It catalyses the reaction S-adenosyl-L-homocysteine + H2O = L-homocysteine + adenosine. Its pathway is amino-acid biosynthesis; L-homocysteine biosynthesis; L-homocysteine from S-adenosyl-L-homocysteine: step 1/1. Its function is as follows. May play a key role in the regulation of the intracellular concentration of adenosylhomocysteine. This is Adenosylhomocysteinase from Pseudomonas putida (strain W619).